A 224-amino-acid chain; its full sequence is 7-cyano-7-deazaguanine synthase (224 aa).

10–20 (LSGGLDSATVV) provides a ligand contact to ATP. The Zn(2+) site is built by Cys189, Cys199, Cys202, and Cys205.

The protein belongs to the QueC family. Zn(2+) is required as a cofactor.

It catalyses the reaction 7-carboxy-7-deazaguanine + NH4(+) + ATP = 7-cyano-7-deazaguanine + ADP + phosphate + H2O + H(+). Its pathway is purine metabolism; 7-cyano-7-deazaguanine biosynthesis. Functionally, catalyzes the ATP-dependent conversion of 7-carboxy-7-deazaguanine (CDG) to 7-cyano-7-deazaguanine (preQ(0)). This chain is 7-cyano-7-deazaguanine synthase, found in Ectopseudomonas mendocina (strain ymp) (Pseudomonas mendocina).